The following is a 658-amino-acid chain: Protein translocase subunit SecA 3 (658 aa).

ATP is bound by residues Q111, 129–133, and D536; that span reads GEGKT.

Belongs to the SecA family. Monomer and homodimer. Part of the essential Sec protein translocation apparatus which comprises SecA, SecYEG and auxiliary proteins SecDF-YajC and YidC.

It is found in the cell inner membrane. The protein localises to the cytoplasm. It carries out the reaction ATP + H2O + cellular proteinSide 1 = ADP + phosphate + cellular proteinSide 2.. In terms of biological role, part of the Sec protein translocase complex. Interacts with the SecYEG preprotein conducting channel. Has a central role in coupling the hydrolysis of ATP to the transfer of proteins into and across the cell membrane, serving both as a receptor for the preprotein-SecB complex and as an ATP-driven molecular motor driving the stepwise translocation of polypeptide chains across the membrane. The sequence is that of Protein translocase subunit SecA 3 from Magnetococcus marinus (strain ATCC BAA-1437 / JCM 17883 / MC-1).